A 153-amino-acid polypeptide reads, in one-letter code: Iron-sulfur cluster assembly scaffold protein IscU 1 (153 aa).

[2Fe-2S] cluster-binding residues include C33, C58, H101, and C102.

This sequence belongs to the NifU family. In terms of assembly, forms a heterotetramer with IscS2.

Its function is as follows. A scaffold on which IscS assembles Fe-S clusters. Subsequently gives the nascent cluster to other proteins. It is likely that Fe-S cluster coordination is flexible as the role of this complex is to build and then hand off Fe-S clusters. This is Iron-sulfur cluster assembly scaffold protein IscU 1 (iscU1) from Archaeoglobus fulgidus (strain ATCC 49558 / DSM 4304 / JCM 9628 / NBRC 100126 / VC-16).